Consider the following 171-residue polypeptide: UPF0398 protein Sez_1569 (171 aa).

This sequence belongs to the UPF0398 family.

This Streptococcus equi subsp. zooepidemicus (strain MGCS10565) protein is UPF0398 protein Sez_1569.